A 437-amino-acid chain; its full sequence is MKQFRFIDLFAGIGGFRLGLEAVGGICVGSAEIDQQAIKVYRQNWPTDRSEHNLGDITTLQQLPAHDLVVGGVPCQPWSIAGKNQAFDDPRGQLWADVIRLVRINQPKAFIFENVKGLIDPRNRLCLESILDSFKAEGYNVYYKLLNSFDYGVAQNRDRVFIIGIQQKLGVPDFSFPEYSESEQRLYDILDNLQTPSIIPESLPIQRNLFGERIEVGFNKLTPRGAFNDFFILNDIRNGPTSIHSWEIYATTEREKQICTTIMRNRGNPRYGDCDGNPMSYQDIADLVVDLAESELQVLIQKRILRQYEDGKYEFFNRRLSGGIDGTYRIFLPHARFFGRLTARGMHDEIAEISVSGATAEAYKQNFIQQILIPKRHRPITVNEAARIQGFPATFKFHSNQSANFRLIGNSVAPPVIMALGKALPNDHLFEPELCEV.

The SAM-dependent MTase C5-type domain maps to 4–431 (FRFIDLFAGI…KALPNDHLFE (428 aa)). Residue cysteine 75 is part of the active site.

The protein belongs to the class I-like SAM-binding methyltransferase superfamily. C5-methyltransferase family.

It catalyses the reaction a 2'-deoxycytidine in DNA + S-adenosyl-L-methionine = a 5-methyl-2'-deoxycytidine in DNA + S-adenosyl-L-homocysteine + H(+). Functionally, a methylase that recognizes the double-stranded sequence 5'-GGWCC-3', methylates C-? on both strands and protects the DNA from cleavage by the HgiCII endonuclease. This chain is Type II methyltransferase M.HgiCII, found in Herpetosiphon aurantiacus (Herpetosiphon giganteus).